A 121-amino-acid polypeptide reads, in one-letter code: MDPAHHIKDTSAELLSQQDFSILQSRLLEFLASQEARETVTASKELTLLRQGIRQLKEKVSKMEPEEMTVKEKKSIIEILKARIALKKAFLKMALSESNDTVVKKEDVRESPVDTFMENAT.

Residues threonine 101 to threonine 121 form a disordered region. The segment covering valine 102 to proline 112 has biased composition (basic and acidic residues).

This is an uncharacterized protein from Schizosaccharomyces pombe (strain 972 / ATCC 24843) (Fission yeast).